The chain runs to 1757 residues: E3 ubiquitin-protein ligase UBR1 (1757 aa).

The tract at residues 1 to 24 is disordered; that stretch reads MADEEMDGAERMDVSPEPPLAPQR. The residue at position 2 (Ala-2) is an N-acetylalanine. Residues 97–168 form a UBR-type zinc finger; the sequence is QLCGKVFKSG…TGPFCVDHEP (72 aa). Residues Cys-99, Cys-112, Cys-115, Cys-124, Cys-127, His-133, and His-136 each contribute to the Zn(2+) site. Residue Phe-148 participates in a peptide binding. Cys-149 is a Zn(2+) binding site. An a peptide-binding site is contributed by Asp-150. Cys-151 is a Zn(2+) binding site. Residue Asp-153 participates in a peptide binding. Residues Cys-163 and His-166 each coordinate Zn(2+). Positions 842–868 are disordered; sequence QHSKAEHMQKKRRKQENKDEALPPPPP. The interval 1022–1057 is UBC2-binding region (U2BR); the sequence is RKRKAEAARLHRQKIMAQMSALQKNFIETHKLMYDN. Zn(2+) contacts are provided by Cys-1101, Cys-1104, Cys-1162, His-1164, His-1167, and Cys-1170. An RING-type; atypical zinc finger spans residues 1101-1204; sequence CILCQEEQEV…SGEYLCPLCK (104 aa). Ser-1182 bears the Phosphoserine mark. Residues Cys-1200, Cys-1203, Cys-1635, Cys-1638, and Cys-1661 each contribute to the Zn(2+) site.

This sequence belongs to the E3 ubiquitin-protein ligase UBR1-like family. As to quaternary structure, interacts with RECQL4. Present in skeletal muscle and liver (at protein level). Broadly expressed, with highest levels in skeletal muscle and heart. Expressed in acinar cells of the pancreas. In testes, expressed primarily in spermatogonia.

Its subcellular location is the cytoplasm. The protein localises to the cytosol. The enzyme catalyses S-ubiquitinyl-[E2 ubiquitin-conjugating enzyme]-L-cysteine + [acceptor protein]-L-lysine = [E2 ubiquitin-conjugating enzyme]-L-cysteine + N(6)-ubiquitinyl-[acceptor protein]-L-lysine.. The protein operates within protein modification; protein ubiquitination. Functionally, E3 ubiquitin-protein ligase which is a component of the N-end rule pathway. Recognizes and binds proteins bearing specific N-terminal residues (N-degrons) that are destabilizing according to the N-end rule, leading to their ubiquitination and subsequent degradation. Recognizes both type-1 and type-2 N-degrons, containing positively charged amino acids (Arg, Lys and His) and bulky and hydrophobic amino acids, respectively. Does not ubiquitinate proteins that are acetylated at the N-terminus. In contrast, it strongly binds methylated N-degrons. Binds leucine and is a negative regulator of the leucine-mTOR signaling pathway, thereby controlling cell growth. The polypeptide is E3 ubiquitin-protein ligase UBR1 (Mus musculus (Mouse)).